Here is a 247-residue protein sequence, read N- to C-terminus: Uridylate kinase (247 aa).

An ATP-binding site is contributed by 21–24 (KVSG). G63 lines the UMP pocket. G64 and R68 together coordinate ATP. UMP-binding positions include D83 and 144-151 (TGNPFCTT). Residues T171, Q172, Y177, and D180 each coordinate ATP.

It belongs to the UMP kinase family. In terms of assembly, homohexamer.

It localises to the cytoplasm. It carries out the reaction UMP + ATP = UDP + ADP. It functions in the pathway pyrimidine metabolism; CTP biosynthesis via de novo pathway; UDP from UMP (UMPK route): step 1/1. With respect to regulation, inhibited by UTP. Functionally, catalyzes the reversible phosphorylation of UMP to UDP. The protein is Uridylate kinase of Rickettsia rickettsii (strain Sheila Smith).